We begin with the raw amino-acid sequence, 884 residues long: MSIDNQASTALKNSGQEVKNNTNQTSELSKEEKLRKRREQLELWRQKKQQQQQEQEEVQNKAKKTEDSTNNTSTEEVKKSRQQRIEEWKRARLQKQQATKEKTTTITIKKKVHSQTTRPTLKRNLDFGDDEDDRKNSHRPVFKKPSLEYDEISEHQNDKESEDELDVFLASIRESELKSDNTKAEKAIESIPEGDVENEKENDDYGGDGDEEDESDEESRLQDLISTKLTKLQNKGKELQSIDHSQENYQEFRKVFYREAYELSALSDEQVELIRQDLDNIKVKGTDVPRPILKWSHLALPTNLSSVIHDKLKFEKPSAIQSQALPTILSGRDVIGIAKTGSGKTLSYVLPMLRHIQDQQFSKDNQGPIGLILSPTRELALQIEKEILNFTKRNNNLRVCCCYGGSSIENQINELKKGVEIIVGTPGRVIDLLAANSGRVLNLKRCTFVVLDEADRMFDLGFEPQVNKILTQIRPDRQTVLFSATFPRKMETLAKQILTDPVVIIVGGISVVAPEIKQEVVLFETSAEEQDKYKQQRVEKLHDILTNYQIEHPDSKILVFTEKQNDADELVANLLSNKYPAIAIHGGKDQMDRKYAIKEFASMDSGINILIATSIAARGLDVRNLGLVINFDPPNHMEDYVHRVGRTGRAGAKGNAITFVSSSQPKEVFNLVKALKLSHSDIDPKLEEIANKFVTKVKAGKEKISSGFGGKGLDNLQEVRDNKLKLEKQRFGDQQPQRQQEETETKKSNDEPVPDIALPEFNIIEGNTPETSGPDKCKFYCRIVINDLPQKVRWNIVQRESLSKIIDESRTSITTRGQYYPPGSKPLSNDQERNGSLAKLYLLVEGLTLQSVTEAITLIKKKMLESLDILNQRENLQPTGRYVV.

A compositionally biased stretch (polar residues) spans 1-25 (MSIDNQASTALKNSGQEVKNNTNQT). The interval 1–220 (MSIDNQASTA…EEDESDEESR (220 aa)) is disordered. 4 stretches are compositionally biased toward basic and acidic residues: residues 28–45 (LSKE…ELWR), 58–67 (VQNKAKKTED), 75–90 (EEVK…EWKR), and 173–188 (RESE…EKAI). Positions 192-217 (PEGDVENEKENDDYGGDGDEEDESDE) are enriched in acidic residues. The Q motif motif lies at 293-322 (LKWSHLALPTNLSSVIHDKLKFEKPSAIQS). A Helicase ATP-binding domain is found at 325-504 (LPTILSGRDV…KQILTDPVVI (180 aa)). Position 338–345 (338–345 (AKTGSGKT)) interacts with ATP. Positions 452-455 (DEAD) match the DEAD box motif. The Helicase C-terminal domain maps to 540–690 (KLHDILTNYQ…DIDPKLEEIA (151 aa)). The disordered stretch occupies residues 727 to 754 (EKQRFGDQQPQRQQEETETKKSNDEPVP). Positions 739 to 750 (QQEETETKKSND) are enriched in basic and acidic residues.

Belongs to the DEAD box helicase family. DDX46/PRP5 subfamily.

It localises to the nucleus. It catalyses the reaction ATP + H2O = ADP + phosphate + H(+). ATP-dependent RNA helicase involved spliceosome assembly and in nuclear splicing. Catalyzes an ATP-dependent conformational change of U2 snRNP. Bridges U1 and U2 snRNPs and enables stable U2 snRNP association with intron RNA. The protein is Pre-mRNA-processing ATP-dependent RNA helicase PRP5 (PRP5) of Candida albicans (strain SC5314 / ATCC MYA-2876) (Yeast).